The primary structure comprises 264 residues: Thiazole synthase (264 aa).

Lysine 106 (schiff-base intermediate with DXP) is an active-site residue. 1-deoxy-D-xylulose 5-phosphate-binding positions include glycine 167, 193 to 194, and 215 to 216; these read AG and NT.

It belongs to the ThiG family. As to quaternary structure, homotetramer. Forms heterodimers with either ThiH or ThiS.

The protein localises to the cytoplasm. It catalyses the reaction [ThiS sulfur-carrier protein]-C-terminal-Gly-aminoethanethioate + 2-iminoacetate + 1-deoxy-D-xylulose 5-phosphate = [ThiS sulfur-carrier protein]-C-terminal Gly-Gly + 2-[(2R,5Z)-2-carboxy-4-methylthiazol-5(2H)-ylidene]ethyl phosphate + 2 H2O + H(+). Its pathway is cofactor biosynthesis; thiamine diphosphate biosynthesis. Functionally, catalyzes the rearrangement of 1-deoxy-D-xylulose 5-phosphate (DXP) to produce the thiazole phosphate moiety of thiamine. Sulfur is provided by the thiocarboxylate moiety of the carrier protein ThiS. In vitro, sulfur can be provided by H(2)S. The protein is Thiazole synthase of Xanthomonas euvesicatoria pv. vesicatoria (strain 85-10) (Xanthomonas campestris pv. vesicatoria).